Consider the following 503-residue polypeptide: Ribose import ATP-binding protein RbsA 1 (503 aa).

ABC transporter domains are found at residues 5–241 (IALE…VGRA) and 253–495 (IGQP…AGIE). An ATP-binding site is contributed by 37–44 (GENGAGKS).

This sequence belongs to the ABC transporter superfamily. Ribose importer (TC 3.A.1.2.1) family. As to quaternary structure, the complex is composed of an ATP-binding protein (RbsA), two transmembrane proteins (RbsC) and a solute-binding protein (RbsB).

It is found in the cell inner membrane. The catalysed reaction is D-ribose(out) + ATP + H2O = D-ribose(in) + ADP + phosphate + H(+). Part of the ABC transporter complex RbsABC involved in ribose import. Responsible for energy coupling to the transport system. The polypeptide is Ribose import ATP-binding protein RbsA 1 (Rhizobium meliloti (strain 1021) (Ensifer meliloti)).